A 204-amino-acid chain; its full sequence is Holliday junction branch migration complex subunit RuvA (204 aa).

The domain I stretch occupies residues 1 to 64 (MIGRLRGILL…EDAQLLYGFN (64 aa)). The domain II stretch occupies residues 65–143 (TVKERALFRE…GWGAGDLFTP (79 aa)). A flexible linker region spans residues 144–155 (FTDAAPTDSAAA). The interval 156 to 204 (SSNSAEEEAVSALLALGYKPTQASKVVSQIAKPDMSSEQLIREALKSMV) is domain III.

The protein belongs to the RuvA family. In terms of assembly, homotetramer. Forms an RuvA(8)-RuvB(12)-Holliday junction (HJ) complex. HJ DNA is sandwiched between 2 RuvA tetramers; dsDNA enters through RuvA and exits via RuvB. An RuvB hexamer assembles on each DNA strand where it exits the tetramer. Each RuvB hexamer is contacted by two RuvA subunits (via domain III) on 2 adjacent RuvB subunits; this complex drives branch migration. In the full resolvosome a probable DNA-RuvA(4)-RuvB(12)-RuvC(2) complex forms which resolves the HJ.

Its subcellular location is the cytoplasm. In terms of biological role, the RuvA-RuvB-RuvC complex processes Holliday junction (HJ) DNA during genetic recombination and DNA repair, while the RuvA-RuvB complex plays an important role in the rescue of blocked DNA replication forks via replication fork reversal (RFR). RuvA specifically binds to HJ cruciform DNA, conferring on it an open structure. The RuvB hexamer acts as an ATP-dependent pump, pulling dsDNA into and through the RuvAB complex. HJ branch migration allows RuvC to scan DNA until it finds its consensus sequence, where it cleaves and resolves the cruciform DNA. The polypeptide is Holliday junction branch migration complex subunit RuvA (Vibrio parahaemolyticus serotype O3:K6 (strain RIMD 2210633)).